We begin with the raw amino-acid sequence, 777 residues long: Endonuclease MutS2 (777 aa).

An ATP-binding site is contributed by 328–335; it reads GPNTGGKT. The 76-residue stretch at 702–777 folds into the Smr domain; sequence LDLRGKRYEE…GSGATIVIFK (76 aa).

It belongs to the DNA mismatch repair MutS family. MutS2 subfamily. As to quaternary structure, homodimer. Binds to stalled ribosomes, contacting rRNA.

Functionally, endonuclease that is involved in the suppression of homologous recombination and thus may have a key role in the control of bacterial genetic diversity. In terms of biological role, acts as a ribosome collision sensor, splitting the ribosome into its 2 subunits. Detects stalled/collided 70S ribosomes which it binds and splits by an ATP-hydrolysis driven conformational change. Acts upstream of the ribosome quality control system (RQC), a ribosome-associated complex that mediates the extraction of incompletely synthesized nascent chains from stalled ribosomes and their subsequent degradation. Probably generates substrates for RQC. The sequence is that of Endonuclease MutS2 from Streptococcus gordonii (strain Challis / ATCC 35105 / BCRC 15272 / CH1 / DL1 / V288).